Reading from the N-terminus, the 349-residue chain is D-alanine--D-alanine ligase (349 aa).

One can recognise an ATP-grasp domain in the interval 132–335 (KHVFEAVGVP…YSDLIEKLVD (204 aa)). 162–217 (VEKLEFPVFVKPANMGSSVGISKVDDLADLQPALSEAYKYDNRVVIEQGVDAREIE) serves as a coordination point for ATP. Residues Asp289, Glu302, and Asn304 each coordinate Mg(2+).

It belongs to the D-alanine--D-alanine ligase family. Mg(2+) serves as cofactor. Mn(2+) is required as a cofactor.

Its subcellular location is the cytoplasm. It carries out the reaction 2 D-alanine + ATP = D-alanyl-D-alanine + ADP + phosphate + H(+). The protein operates within cell wall biogenesis; peptidoglycan biosynthesis. In terms of biological role, cell wall formation. This chain is D-alanine--D-alanine ligase, found in Lactococcus lactis subsp. cremoris (strain SK11).